The sequence spans 449 residues: MRSKTFSVLSSCLLLIATVQGQLSGSVGPSTSISDKKAVKTCNVLDYGATNDNKTDVGQPIMDAFEDCGSGGVIYIPDGDYLIQEWVSLENGTAFAIQLDGVIYRNGTTTSQGYMFGISGGSDFELYSSTSKGAIQGSGYLYHMNGEFTAPRLLHISDVSHWSVHDIALVDAPMFHFVIDDASNGEVYNMAIRGGNSGGLDGIDVSGDNIWIHDVMVTNKDECVTVKTGSHNFQIENIYCNWSGGCAMGSLGSGTNVSNIVYRNIYTWNSNQMYMIKSNGGDGEVSNLLFENFIGHGNAYSLDLDSEWSSMDTVDGDGIFYRNITFKNWKGTETDGESRPSIRVICPEATPCTDITIEDVDLWTEEGDSETYVCKNAFGSGACLKSDSSSTATYATTTTVTSAPSGYSATTMAADLTSAFGTDASIPIPTIPTSFYPGATPYSALAGSS.

Positions 1–21 (MRSKTFSVLSSCLLLIATVQG) are cleaved as a signal peptide. A disulfide bond links C42 and C68. N-linked (GlcNAc...) asparagine glycosylation is found at N53, N91, and N106. D221 acts as the Proton donor in catalysis. The cysteines at positions 223 and 240 are disulfide-linked. 2 N-linked (GlcNAc...) asparagine glycosylation sites follow: N241 and N256. H296 is a catalytic residue. The N-linked (GlcNAc...) asparagine glycan is linked to N323. 2 disulfides stabilise this stretch: C346–C352 and C374–C383.

This sequence belongs to the glycosyl hydrolase 28 family.

Its subcellular location is the secreted. The enzyme catalyses Endohydrolysis of alpha-D-GalA-(1-&gt;2)-alpha-L-Rha glycosidic bond in the rhamnogalacturonan I backbone with initial inversion of anomeric configuration releasing oligosaccharides with beta-D-GalA at the reducing end.. Pectinolytic enzymes consist of four classes of enzymes: pectine lyase, polygalacturonase, pectin methylesterase and rhamnogalacturonase. Hydrolyzes alpha-D-galacturonopyranosyl-(1,2)-alpha-L-rhamnopyranosyl linkages in the backbone of the hairy regions of pectins. In Aspergillus flavus (strain ATCC 200026 / FGSC A1120 / IAM 13836 / NRRL 3357 / JCM 12722 / SRRC 167), this protein is Probable rhamnogalacturonase E (rhgE).